We begin with the raw amino-acid sequence, 83 residues long: Short neurotoxin II (83 aa).

The signal sequence occupies residues methionine 1–threonine 21. Disulfide bonds link cysteine 24–cysteine 45, cysteine 38–cysteine 62, cysteine 64–cysteine 75, and cysteine 76–cysteine 81.

Belongs to the three-finger toxin family. Short-chain subfamily. Type I alpha-neurotoxin sub-subfamily. Expressed by the venom gland.

It is found in the secreted. Functionally, binds to muscle nicotinic acetylcholine receptor (nAChR) and inhibit acetylcholine from binding to the receptor, thereby impairing neuromuscular transmission. This Laticauda colubrina (Yellow-lipped sea krait) protein is Short neurotoxin II.